Consider the following 220-residue polypeptide: Tumor protein p53-inducible nuclear protein 2 (220 aa).

The segment covering 1-12 (MFQRLSSLFFST) has biased composition (low complexity). Disordered regions lie at residues 1–24 (MFQRLSSLFFSTPSPPEDPDCPRA), 41–69 (PDSYAAPPSPGAAPAPAGRPPPAPSLMDE), and 119–220 (PGSP…QFNY). S14 is subject to Phosphoserine. Residues 26-41 (VSEEDEVDGWLIIDLP) carry the LIR motif. Residues 47 to 64 (PPSPGAAPAPAGRPPPAP) are compositionally biased toward pro residues. The residue at position 136 (S136) is a Phosphoserine. Residues 152–170 (HAAPLPARAALLEKAGQVR) are compositionally biased toward low complexity. The segment covering 205–220 (NQSSFIYQPCQRQFNY) has biased composition (polar residues).

As to quaternary structure, interacts with VMP1, GABARAP, GABARAPL1, GABARAPL2, MAP1LC3A, MAP1LC3B, MAP1LC3C and THRA.

The protein localises to the cytoplasm. It localises to the cytosol. Its subcellular location is the nucleus. The protein resides in the PML body. It is found in the cytoplasmic vesicle. The protein localises to the autophagosome. Its function is as follows. Dual regulator of transcription and autophagy. Positively regulates autophagy and is required for autophagosome formation and processing. May act as a scaffold protein that recruits MAP1LC3A, GABARAP and GABARAPL2 and brings them to the autophagosome membrane by interacting with VMP1 where, in cooperation with the BECN1-PI3-kinase class III complex, they trigger autophagosome development. Acts as a transcriptional activator of THRA. The polypeptide is Tumor protein p53-inducible nuclear protein 2 (TP53INP2) (Homo sapiens (Human)).